Here is a 328-residue protein sequence, read N- to C-terminus: MCTGDRKMPKSILLTGSTGFVGTNLVKSLTLKSDYIVKSAVRHAVNKDDGLLFEVGDINASTDFELPLKNTTVVVHCAARAHVMDDKEAEPLTLYREVNTAGTVNLAKQAIDSGVKRFIFISSIKVNGEGTLVGCPFKTEDNHAPEDDYGLSKSEAEKQLVALAKDSSMEVVIIRPTIVYGPGVKANFASLMRLVSKGIPLPFGSITQNKRSLVSINNLVDLIVTCIDHPKAANQVFLVSDGHDVSTAEMVRELAIALDKPTWQLPVPIWCYKLFGKLFGKSDIVDRLTGTLQVDISHTKETLGWKPPQTLQEGFKQTAQAFLQANNR.

Residues 20–21, 41–46, 57–58, 77–81, S123, Y149, and K153 contribute to the NAD(+) site; these read FV, VRHAVN, DI, and CAARA. 2 residues coordinate substrate: S123 and Y149. The active-site Proton acceptor is Y149. Residues 198 to 199 and 215 to 217 contribute to the substrate site; these read GI and SIN.

This sequence belongs to the NAD(P)-dependent epimerase/dehydratase family. As to quaternary structure, homodimer. NAD(+) is required as a cofactor.

The catalysed reaction is UDP-alpha-D-glucose = UDP-alpha-D-galactose. It functions in the pathway bacterial outer membrane biogenesis; LPS O-antigen biosynthesis. Its function is as follows. Involved in the metabolism of galactose. Catalyzes the conversion of UDP-galactose (UDP-Gal) to UDP-glucose (UDP-Glc) through a mechanism involving the transient reduction of NAD. The polypeptide is UDP-glucose 4-epimerase (galE) (Vibrio cholerae).